We begin with the raw amino-acid sequence, 460 residues long: Wadjet protein JetA (460 aa).

Component of antiplasmid transformation system Wadjet type I, composed of JetA, JetB, JetC and JetD. Expression of Wadjet type I in B.subtilis (strain BEST7003) reduces the transformation efficiency of plasmid pHCMC05. This is Wadjet protein JetA from Bacillus cereus (strain Q1).